We begin with the raw amino-acid sequence, 479 residues long: Adenosylhomocysteinase (479 aa).

Threonine 66, aspartate 142, and glutamate 203 together coordinate substrate. An NAD(+)-binding site is contributed by 204-206; the sequence is TTT. Substrate contacts are provided by lysine 233 and aspartate 237. NAD(+)-binding positions include asparagine 238, 267 to 272, glutamate 290, asparagine 325, 346 to 348, and asparagine 394; these read GYGDVG and IGH.

The protein belongs to the adenosylhomocysteinase family. NAD(+) serves as cofactor.

The protein localises to the cytoplasm. It catalyses the reaction S-adenosyl-L-homocysteine + H2O = L-homocysteine + adenosine. Its pathway is amino-acid biosynthesis; L-homocysteine biosynthesis; L-homocysteine from S-adenosyl-L-homocysteine: step 1/1. May play a key role in the regulation of the intracellular concentration of adenosylhomocysteine. This Oleidesulfovibrio alaskensis (strain ATCC BAA-1058 / DSM 17464 / G20) (Desulfovibrio alaskensis) protein is Adenosylhomocysteinase.